The sequence spans 458 residues: RuvB-like helicase 1 (458 aa).

Residues 1-29 (MVQISEVKGNSRDNRTAAHTHIKGLGLRP) are disordered. 71–78 (GGPGTGKT) lines the ATP pocket.

The protein belongs to the RuvB family. As to quaternary structure, may form heterododecamers with RVB2. Component of the SWR1 chromatin remodeling complex, the INO80 chromatin remodeling complex, and of the R2TP complex.

Its subcellular location is the nucleus. It catalyses the reaction ATP + H2O = ADP + phosphate + H(+). In terms of biological role, DNA helicase which participates in several chromatin remodeling complexes, including the SWR1 and the INO80 complexes. The SWR1 complex mediates the ATP-dependent exchange of histone H2A for the H2A variant HZT1 leading to transcriptional regulation of selected genes by chromatin remodeling. The INO80 complex remodels chromatin by shifting nucleosomes and is involved in DNA repair. Also involved in pre-rRNA processing. The sequence is that of RuvB-like helicase 1 (rvb1) from Emericella nidulans (strain FGSC A4 / ATCC 38163 / CBS 112.46 / NRRL 194 / M139) (Aspergillus nidulans).